Reading from the N-terminus, the 433-residue chain is ATP-sensitive inward rectifier potassium channel 12 (433 aa).

Residues 1 to 77 (MTAASRANPY…LADMFTTCVD (77 aa)) lie on the Cytoplasmic side of the membrane. Position 75 is an S-nitrosocysteine (Cys-75). The helical transmembrane segment at 78 to 104 (IRWRYMLLIFSLAFLASWLLFGIIFWV) threads the bilayer. A 1,2-diacyl-sn-glycero-3-phospho-(1D-myo-inositol-4,5-bisphosphate)-binding residues include Arg-79 and Arg-81. At 105–129 (IAVAHGDLEPAEGRGRTPCVMQVHG) the chain is on the extracellular side. Cysteines 123 and 155 form a disulfide. The helical; Pore-forming intramembrane region spans 130 to 146 (FMAAFLFSIETQTTIGY). Residues Thr-143, Ile-144, Gly-145, and Tyr-146 each coordinate K(+). The Selectivity filter signature appears at 143–148 (TIGYGL). Residues 147-155 (GLRCVTEEC) lie on the Extracellular side of the membrane. Residues 156 to 183 (PVAVFMVVAQSIVGCIIDSFMIGAIMAK) form a helical membrane-spanning segment. A 1,2-diacyl-sn-glycero-3-phospho-(1D-myo-inositol-4,5-bisphosphate) contacts are provided by Lys-183 and Lys-188. At 184–433 (MARPKKRAQT…QRPYRRESEI (250 aa)) the chain is on the cytoplasmic side. The tract at residues 387–433 (DEEDEADGDQDGRSRDGLSPQARHDFDRLQAGGGVLEQRPYRRESEI) is disordered. Over residues 396-414 (QDGRSRDGLSPQARHDFDR) the composition is skewed to basic and acidic residues. Residues 431–433 (SEI) carry the PDZ-binding motif.

It belongs to the inward rectifier-type potassium channel (TC 1.A.2.1) family. KCNJ12 subfamily. Homotetramer. Forms heteromer with KCNJ4. Can form heteromeric channels with Kir2.6/KCNJ18. Association, via its PDZ-recognition domain, with LIN7A, LIN7B, LIN7C, DLG1, CASK and APBA1 plays a key role in its localization and trafficking.

Its subcellular location is the membrane. It is found in the cell membrane. It localises to the sarcolemma. The protein localises to the T-tubule. It catalyses the reaction K(+)(in) = K(+)(out). Its activity is regulated as follows. Activated by phosphatidylinositol 4,5-biphosphate (PtdIns(4,5)P2). PtdIns(4,5)P2 binding to the cytoplasmic side of the channel triggers a conformation change leading to channel opening. Inhibited by Ba(2+). In terms of biological role, inward rectifying potassium channel that probably participates in controlling the resting membrane potential in electrically excitable cells. Probably participates in establishing action potential waveform and excitability of neuronal and muscle tissues. Inward rectifier potassium channels are characterized by a greater tendency to allow potassium to flow into the cell rather than out of it. Their voltage dependence is regulated by the concentration of extracellular potassium; as external potassium is raised, the voltage range of the channel opening shifts to more positive voltages. The inward rectification is mainly due to the blockage of outward current by internal magnesium. The protein is ATP-sensitive inward rectifier potassium channel 12 (KCNJ12) of Homo sapiens (Human).